The chain runs to 370 residues: Coiled-coil domain-containing protein 89 (370 aa).

Positions 1–21 (MPQEEKTLRMDTPPPDEILGK) are disordered. Position 12 is a phosphothreonine (T12). The stretch at 36 to 346 (KEMDGLREAL…YDELRLQSEA (311 aa)) forms a coiled coil.

The protein belongs to the CCDC89 family. As to quaternary structure, interacts with HEY1. Expression is restricted to the adult testis, where localization is almost exclusive to round spermatids.

Its subcellular location is the cytoplasm. It is found in the nucleus. The sequence is that of Coiled-coil domain-containing protein 89 from Mus musculus (Mouse).